Consider the following 99-residue polypeptide: Signal recognition particle 19 kDa protein (99 aa).

Belongs to the SRP19 family. In terms of assembly, part of the signal recognition particle protein translocation system, which is composed of SRP and FtsY. Archaeal SRP consists of a 7S RNA molecule of 300 nucleotides and two protein subunits: SRP54 and SRP19.

The protein localises to the cytoplasm. Its function is as follows. Involved in targeting and insertion of nascent membrane proteins into the cytoplasmic membrane. Binds directly to 7S RNA and mediates binding of the 54 kDa subunit of the SRP. This is Signal recognition particle 19 kDa protein from Pyrococcus abyssi (strain GE5 / Orsay).